A 240-amino-acid chain; its full sequence is 2-C-methyl-D-erythritol 2,4-cyclodiphosphate synthase, apicoplast (240 aa).

Asp-71 and His-73 together coordinate a divalent metal cation. 4-CDP-2-C-methyl-D-erythritol 2-phosphate-binding positions include 71 to 73 and 115 to 116; these read DIH and HS. His-123 contacts a divalent metal cation. 4-CDP-2-C-methyl-D-erythritol 2-phosphate-binding positions include 137–139, 142–146, 181–187, and 212–214; these read DIG, FPDKD, AQVPKIS, and GKT.

It belongs to the IspF family. As to quaternary structure, homotrimer. A divalent metal cation is required as a cofactor.

The protein resides in the plastid. Its subcellular location is the apicoplast. The enzyme catalyses 4-CDP-2-C-methyl-D-erythritol 2-phosphate = 2-C-methyl-D-erythritol 2,4-cyclic diphosphate + CMP. It participates in isoprenoid biosynthesis; isopentenyl diphosphate biosynthesis via DXP pathway; isopentenyl diphosphate from 1-deoxy-D-xylulose 5-phosphate: step 4/6. Functionally, in the mevalonate-independent isoprenoid biosynthetic pathway, converts 4-diphosphocytidyl-2C-methyl-D-erythritol 2-phosphate into 2C-methyl-D-erythritol 2,4-cyclodiphosphate and CMP. The protein is 2-C-methyl-D-erythritol 2,4-cyclodiphosphate synthase, apicoplast of Plasmodium falciparum (isolate 3D7).